A 528-amino-acid chain; its full sequence is Protein phosphatase 1 regulatory subunit 16A (528 aa).

The stretch at 18–45 forms a coiled coil; it reads STQERLKHAQKRRAQQVKMWAQAEKEAQ. Positions 19–59 are disordered; that stretch reads TQERLKHAQKRRAQQVKMWAQAEKEAQGKKGPGERPRKEAA. A compositionally biased stretch (basic and acidic residues) spans 40-58; that stretch reads AEKEAQGKKGPGERPRKEA. 5 ANK repeats span residues 70 to 99, 103 to 132, 136 to 165, 231 to 260, and 264 to 293; these read PPSV…SPDL, DGLT…NINA, ECWT…NLLA, HGAT…SLSA, and DGWE…DLNA. 2 disordered regions span residues 330-351 and 367-421; these read RQRS…VVRR and QEAI…SPVR. Residue serine 433 is modified to Phosphoserine. The tract at residues 462–505 is disordered; the sequence is QRAAAKLQRPPPEGPESPETAEPGLPGDTVTPQPDCGFRAGGDP. Residue cysteine 524 is the site of S-palmitoyl cysteine attachment. Cysteine 525 is subject to Cysteine methyl ester. Cysteine 525 carries S-farnesyl cysteine lipidation. Residues 526–528 constitute a propeptide, removed in mature form; that stretch reads LLM.

Binds PP1.

It is found in the cell membrane. Functionally, inhibits protein phosphatase 1 activity toward phosphorylase, myosin light chain and myosin substrates. The protein is Protein phosphatase 1 regulatory subunit 16A (PPP1R16A) of Homo sapiens (Human).